A 266-amino-acid chain; its full sequence is MKLSLSPPPYADAPVVVLISGLGGSGSYWLQQLAVLEQEYQVVCYDQRGTGNNPDTLAEDYSIAQMAAELHQALVAAGIEHYAVVGHALGALVGMQLALDYPASVTVLISVNGWLRINAHTRRCFQVRERLLYSGGAQAWVEAQPLFLYPADWMAARAPRLEAEDALALAHFQGKNNLLRRLNALKRADFSHHADRIRCPVQIICASDDLLVPTACSSELHAALPDSQKMVMPYGGHACNVTDPETFNALLLNGLASLLHHREAAL.

It belongs to the AB hydrolase superfamily. Hydrolase RutD family.

The catalysed reaction is carbamate + 2 H(+) = NH4(+) + CO2. Involved in pyrimidine catabolism. May facilitate the hydrolysis of carbamate, a reaction that can also occur spontaneously. This Escherichia coli O103:H2 (strain 12009 / EHEC) protein is Putative carbamate hydrolase RutD.